Here is a 384-residue protein sequence, read N- to C-terminus: Galactokinase (384 aa).

34–37 (EHTD) lines the substrate pocket. 123–129 (SSGLSSS) contributes to the ATP binding site. Positions 129 and 161 each coordinate Mg(2+). The Proton acceptor role is filled by Asp-173. Residue Tyr-222 participates in substrate binding.

Belongs to the GHMP kinase family. GalK subfamily.

It localises to the cytoplasm. It carries out the reaction alpha-D-galactose + ATP = alpha-D-galactose 1-phosphate + ADP + H(+). The protein operates within carbohydrate metabolism; galactose metabolism. Functionally, catalyzes the transfer of the gamma-phosphate of ATP to D-galactose to form alpha-D-galactose-1-phosphate (Gal-1-P). This Haemophilus influenzae (strain PittEE) protein is Galactokinase.